A 522-amino-acid chain; its full sequence is Probable cytochrome P450 12e1, mitochondrial (522 aa).

Heme is bound at residue Cys-468.

It belongs to the cytochrome P450 family. It depends on heme as a cofactor.

It is found in the mitochondrion membrane. The sequence is that of Probable cytochrome P450 12e1, mitochondrial (Cyp12e1) from Drosophila melanogaster (Fruit fly).